The chain runs to 421 residues: Histidine--tRNA ligase (421 aa).

It belongs to the class-II aminoacyl-tRNA synthetase family. In terms of assembly, homodimer.

It localises to the cytoplasm. The enzyme catalyses tRNA(His) + L-histidine + ATP = L-histidyl-tRNA(His) + AMP + diphosphate + H(+). This Francisella tularensis subsp. holarctica (strain OSU18) protein is Histidine--tRNA ligase.